Consider the following 36-residue polypeptide: Alpha-amylase inhibitor AI-3688 (36 aa).

Cys9 and Cys25 are disulfide-bonded.

Functionally, inhibits mammalian alpha-amylases specifically but has no action on plant and microbial alpha-amylases. This is Alpha-amylase inhibitor AI-3688 from Kitasatospora aureofaciens (Streptomyces aureofaciens).